A 223-amino-acid polypeptide reads, in one-letter code: Phosphoribosylformylglycinamidine synthase subunit PurQ (223 aa).

The region spanning 3 to 223 is the Glutamine amidotransferase type-1 domain; it reads FAVLVFPGSN…MVKSWREQHV (221 aa). The active-site Nucleophile is Cys-85. Residues His-193 and Glu-195 contribute to the active site.

Part of the FGAM synthase complex composed of 1 PurL, 1 PurQ and 2 PurS subunits.

It is found in the cytoplasm. It catalyses the reaction N(2)-formyl-N(1)-(5-phospho-beta-D-ribosyl)glycinamide + L-glutamine + ATP + H2O = 2-formamido-N(1)-(5-O-phospho-beta-D-ribosyl)acetamidine + L-glutamate + ADP + phosphate + H(+). The enzyme catalyses L-glutamine + H2O = L-glutamate + NH4(+). It functions in the pathway purine metabolism; IMP biosynthesis via de novo pathway; 5-amino-1-(5-phospho-D-ribosyl)imidazole from N(2)-formyl-N(1)-(5-phospho-D-ribosyl)glycinamide: step 1/2. In terms of biological role, part of the phosphoribosylformylglycinamidine synthase complex involved in the purines biosynthetic pathway. Catalyzes the ATP-dependent conversion of formylglycinamide ribonucleotide (FGAR) and glutamine to yield formylglycinamidine ribonucleotide (FGAM) and glutamate. The FGAM synthase complex is composed of three subunits. PurQ produces an ammonia molecule by converting glutamine to glutamate. PurL transfers the ammonia molecule to FGAR to form FGAM in an ATP-dependent manner. PurS interacts with PurQ and PurL and is thought to assist in the transfer of the ammonia molecule from PurQ to PurL. The polypeptide is Phosphoribosylformylglycinamidine synthase subunit PurQ (Staphylococcus aureus (strain Mu50 / ATCC 700699)).